Here is a 266-residue protein sequence, read N- to C-terminus: 15-hydroxyprostaglandin dehydrogenase [NAD(+)] (266 aa).

NAD(+) is bound by residues 12 to 20 (GAAQGIGRA), 36 to 37 (DW), 63 to 65 (CDV), and Asn-91. Substrate-binding residues include Ser-138 and Gln-148. Tyr-151 serves as the catalytic Proton acceptor. Residues 151–155 (YCASK) and 186–188 (VDT) contribute to the NAD(+) site.

This sequence belongs to the short-chain dehydrogenases/reductases (SDR) family. In terms of assembly, homodimer.

It localises to the cytoplasm. It catalyses the reaction prostaglandin E2 + NAD(+) = 15-oxoprostaglandin E2 + NADH + H(+). The enzyme catalyses (15S)-hydroxy-(5Z,8Z,11Z,13E)-eicosatetraenoate + NAD(+) = 15-oxo-(5Z,8Z,11Z,13E)-eicosatetraenoate + NADH + H(+). The catalysed reaction is (11R)-hydroxy-(5Z,8Z,12E,14Z)-eicosatetraenoate + NAD(+) = 11-oxo-(5Z,8Z,12E,14Z)-eicosatetraenoate + NADH + H(+). It carries out the reaction lipoxin A4 + NAD(+) = 15-oxo-(5S,6R)-dihydroxy-(7E,9E,11Z,13E)-eicosatetraenoate + NADH + H(+). It catalyses the reaction 15-oxo-(5S,6R)-dihydroxy-(7E,9E,11Z)-eicosatrienoate + NADH + H(+) = (5S,6R,15S)-trihydroxy-(7E,9E,11Z)-eicosatrienoate + NAD(+). The enzyme catalyses prostaglandin A1 + NAD(+) = 15-oxo-prostaglandin A1 + NADH + H(+). The catalysed reaction is prostaglandin E1 + NAD(+) = 15-oxoprostaglandin E1 + NADH + H(+). It carries out the reaction 14-hydroxy-(4Z,7Z,10Z,12E,16Z,19Z)-docosahexaenoate + NAD(+) = 14-oxo-(4Z,7Z,10Z,12E,16Z,19Z)-docosahexaenoate + NADH + H(+). It catalyses the reaction resolvin E1 + NAD(+) = 18-oxo-resolvin E1 + NADH + H(+). The enzyme catalyses resolvin D1 + NAD(+) = 8-oxoresolvin D1 + NADH + H(+). The catalysed reaction is resolvin D1 + NAD(+) = 17-oxoresolvin D1 + NADH + H(+). It carries out the reaction resolvin D2 + NAD(+) = 7-oxoresolvin D2 + NADH + H(+). It catalyses the reaction resolvin D2 + NAD(+) = 16-oxoresolvin D2 + NADH + H(+). Catalyzes the NAD-dependent dehydrogenation (oxidation) of a broad array of hydroxylated polyunsaturated fatty acids (mainly eicosanoids and docosanoids, including prostaglandins, lipoxins and resolvins), yielding their corresponding keto (oxo) metabolites. Decreases the levels of the pro-proliferative prostaglandins such as prostaglandin E2 (whose activity is increased in cancer because of an increase in the expression of cyclooxygenase 2) and generates oxo-fatty acid products that can profoundly influence cell function by abrogating pro-inflammatory cytokine expression. Converts resolvins E1, D1 and D2 to their oxo products, which represents a mode of resolvin inactivation. Resolvin E1 plays important roles during the resolution phase of acute inflammation, while resolvins D1 and D2 have a unique role in obesity-induced adipose inflammation. The chain is 15-hydroxyprostaglandin dehydrogenase [NAD(+)] (HPGD) from Bos taurus (Bovine).